The chain runs to 360 residues: RNA-binding protein 1 (360 aa).

The RRM 1 domain occupies 6 to 82; the sequence is YKLFVGGIAK…KPVDVRKAIR (77 aa). The stretch at 93-113 forms a coiled coil; that stretch reads MQFLERKVQQMNGGLREMSSN. The region spanning 120–197 is the RRM 2 domain; that stretch reads KKIFVGGLSS…KRVEVKRAIP (78 aa).

As to expression, highly expressed in inflorescences and roots. Detected in leaves and seedlings, but not in stems. Expressed in vegetative shoot apex and root meristem, but not in root cap. Detected in flower buds, junction of pedicels, joints of immature siliques and pistil.

Its function is as follows. RNA binding protein. Can also bind in vitro to single-stranded DNA. This is RNA-binding protein 1 (RBP1) from Arabidopsis thaliana (Mouse-ear cress).